A 1024-amino-acid polypeptide reads, in one-letter code: Beta-galactosidase (1024 aa).

2 residues coordinate substrate: N100 and D198. D198 serves as a coordination point for Na(+). 3 residues coordinate Mg(2+): E414, H416, and E459. Substrate contacts are provided by residues E459 and 535-538 (EYAH). Residue E459 is the Proton donor of the active site. The active-site Nucleophile is E535. Mg(2+) is bound at residue N595. Na(+) is bound by residues F599 and N602. Residues N602 and W995 each coordinate substrate.

The protein belongs to the glycosyl hydrolase 2 family. Homotetramer. Mg(2+) is required as a cofactor. The cofactor is Na(+).

It carries out the reaction Hydrolysis of terminal non-reducing beta-D-galactose residues in beta-D-galactosides.. This is Beta-galactosidase from Vibrio cholerae serotype O1 (strain ATCC 39541 / Classical Ogawa 395 / O395).